Here is an 82-residue protein sequence, read N- to C-terminus: Probable [Fe-S]-dependent transcriptional repressor (82 aa).

Iron-sulfur cluster-binding residues include Cys56, Cys61, Cys64, and Cys71.

Belongs to the FeoC family.

In terms of biological role, may function as a transcriptional regulator that controls feoABC expression. This chain is Probable [Fe-S]-dependent transcriptional repressor, found in Yersinia enterocolitica serotype O:8 / biotype 1B (strain NCTC 13174 / 8081).